The primary structure comprises 775 residues: Dipeptidyl peptidase 4 (775 aa).

The first 15 residues, 1-15 (MKLLSLLMLAGIAQA), serve as a signal peptide directing secretion. Asn81, Asn111, Asn170, and Asn219 each carry an N-linked (GlcNAc...) asparagine glycan. Catalysis depends on charge relay system residues Ser613, Asp690, and His725.

The protein belongs to the peptidase S9B family.

The protein localises to the secreted. It catalyses the reaction Release of an N-terminal dipeptide, Xaa-Yaa-|-Zaa-, from a polypeptide, preferentially when Yaa is Pro, provided Zaa is neither Pro nor hydroxyproline.. In terms of biological role, extracellular dipeptidyl-peptidase which removes N-terminal dipeptides sequentially from polypeptides having unsubstituted N-termini provided that the penultimate residue is proline. Contributes to pathogenicity. The chain is Dipeptidyl peptidase 4 (DPP4) from Trichophyton tonsurans (Scalp ringworm fungus).